Reading from the N-terminus, the 361-residue chain is Chorismate synthase (361 aa).

NADP(+) contacts are provided by Arg-48 and Arg-54. FMN contacts are provided by residues 125–127 (RSS), 238–239 (NA), Gly-278, 293–297 (KPTSS), and Arg-319.

Belongs to the chorismate synthase family. As to quaternary structure, homotetramer. It depends on FMNH2 as a cofactor.

The enzyme catalyses 5-O-(1-carboxyvinyl)-3-phosphoshikimate = chorismate + phosphate. Its pathway is metabolic intermediate biosynthesis; chorismate biosynthesis; chorismate from D-erythrose 4-phosphate and phosphoenolpyruvate: step 7/7. Functionally, catalyzes the anti-1,4-elimination of the C-3 phosphate and the C-6 proR hydrogen from 5-enolpyruvylshikimate-3-phosphate (EPSP) to yield chorismate, which is the branch point compound that serves as the starting substrate for the three terminal pathways of aromatic amino acid biosynthesis. This reaction introduces a second double bond into the aromatic ring system. This Yersinia pseudotuberculosis serotype IB (strain PB1/+) protein is Chorismate synthase.